Reading from the N-terminus, the 348-residue chain is Trans-L-3-hydroxyproline dehydratase (348 aa).

The Proton acceptor role is filled by C101. Substrate-binding positions include 102–103 (GH), D263, and 268–269 (GS).

It belongs to the proline racemase family. In terms of assembly, homodimer.

It catalyses the reaction trans-3-hydroxy-L-proline = 1-pyrroline-2-carboxylate + H2O. In terms of biological role, catalyzes the dehydration of trans-3-hydroxy-L-proline to delta-1-pyrroline-2-carboxylate (Pyr2C). In Xenopus tropicalis (Western clawed frog), this protein is Trans-L-3-hydroxyproline dehydratase (l3hypdh).